The sequence spans 360 residues: uncharacterized protein (360 aa).

The 232-residue stretch at 4 to 235 folds into the ABC transporter domain; sequence LSLQHIQKIY…PANMFVAGFI (232 aa). 37–44 provides a ligand contact to ATP; the sequence is GPSGCGKS.

Belongs to the ABC transporter superfamily.

This is an uncharacterized protein from Escherichia coli O6:K15:H31 (strain 536 / UPEC).